We begin with the raw amino-acid sequence, 257 residues long: Nickel import system ATP-binding protein NikD (257 aa).

The 242-residue stretch at 4 to 245 (IDIQNLTIKN…HLHPYTERLI (242 aa)) folds into the ABC transporter domain. Residue 37 to 44 (GESGAGKS) coordinates ATP.

It belongs to the ABC transporter superfamily. As to quaternary structure, the complex is composed of two ATP-binding proteins (NikD and NikE), two transmembrane proteins (NikB and NikC) and a solute-binding protein (NikA).

It localises to the cell membrane. It carries out the reaction Ni(2+)(out) + ATP + H2O = Ni(2+)(in) + ADP + phosphate + H(+). Part of the ABC transporter complex NikABCDE (Opp2) involved in nickel import. Probably responsible for energy coupling to the transport system. The polypeptide is Nickel import system ATP-binding protein NikD (Staphylococcus aureus (strain MW2)).